The sequence spans 535 residues: Reticuline oxidase (535 aa).

The first 23 residues, 1-23, serve as a signal peptide directing secretion; the sequence is MMCRSLTLRFFLFIVLLQTCVRG. N-linked (GlcNAc...) asparagine glycosylation is present at asparagine 42. In terms of domain architecture, FAD-binding PCMH-type spans 71–245; the sequence is TVSKPSFIVM…YAWKIKLLPV (175 aa). The 6-(S-cysteinyl)-8alpha-(pros-histidyl)-FAD (His-Cys) cross-link spans 108-170; sequence HSYEGLSYTA…DTLGFTAGWC (63 aa). A glycan (N-linked (GlcNAc...) asparagine) is linked at asparagine 475.

It belongs to the oxygen-dependent FAD-linked oxidoreductase family. It depends on FAD as a cofactor. A metal cation is required as a cofactor. In terms of processing, the FAD cofactor is bound via a bicovalent 6-S-cysteinyl, 8alpha-N1-histidyl FAD linkage. In terms of tissue distribution, expressed in roots and stems. Not detected in leaves or reproductive organs. Restricted to the parietal region of sieve elements adjacent or proximal to laticifers.

The protein resides in the cytoplasmic vesicle. It carries out the reaction (S)-reticuline + O2 = (S)-scoulerine + H2O2 + H(+). It participates in alkaloid biosynthesis; (S)-scoulerine biosynthesis; (S)-scoulerine from (S)-reticuline: step 1/1. Oxygen-dependent FAD-dependent oxidoreductase essential to the formation of benzophenanthridine alkaloids in the response of plants to pathogenic attack. Catalyzes the stereospecific conversion of the N-methyl moiety of (S)-reticuline into the berberine bridge carbon of (S)-scoulerine. Involved in the biosynthesis of sanguinarine. The sequence is that of Reticuline oxidase (BBE1) from Papaver somniferum (Opium poppy).